Consider the following 339-residue polypeptide: RNA polymerase principal sigma factor HrdC (339 aa).

Low complexity predominate over residues 1–10 (MAPTARTPTA). Disordered stretches follow at residues 1–37 (MAPTARTPTARTRDDRRATTRTARLRTRIPEPDEEPD) and 71–101 (REELETADTGEPAPTPRRRRTLEETVHDGQE). Residues 91–101 (TLEETVHDGQE) show a composition bias toward basic and acidic residues. The Polymerase core binding motif lies at 130–143 (DVIQEGNLGLIRAV). A DNA-binding region (H-T-H motif) is located at residues 300–319 (LQQVAQHVGLTRERVRQLEK).

Belongs to the sigma-70 factor family. Interacts transiently with the RNA polymerase catalytic core.

Functionally, sigma factors are initiation factors that promote the attachment of RNA polymerase to specific initiation sites and are then released. The chain is RNA polymerase principal sigma factor HrdC (hrdC) from Streptomyces coelicolor (strain ATCC BAA-471 / A3(2) / M145).